The primary structure comprises 97 residues: Large ribosomal subunit protein uL23 (97 aa).

Belongs to the universal ribosomal protein uL23 family. Part of the 50S ribosomal subunit. Contacts protein L29, and trigger factor when it is bound to the ribosome.

One of the early assembly proteins it binds 23S rRNA. One of the proteins that surrounds the polypeptide exit tunnel on the outside of the ribosome. Forms the main docking site for trigger factor binding to the ribosome. This is Large ribosomal subunit protein uL23 from Acidithiobacillus ferrooxidans (strain ATCC 23270 / DSM 14882 / CIP 104768 / NCIMB 8455) (Ferrobacillus ferrooxidans (strain ATCC 23270)).